A 259-amino-acid chain; its full sequence is Diaminopimelate epimerase (259 aa).

Substrate contacts are provided by N14, Q42, and N60. The active-site Proton donor is C69. Substrate contacts are provided by residues 70–71 (GN), N151, N184, and 202–203 (ER). Catalysis depends on C211, which acts as the Proton acceptor. Position 212–213 (212–213 (GS)) interacts with substrate.

This sequence belongs to the diaminopimelate epimerase family. Homodimer.

Its subcellular location is the cytoplasm. The enzyme catalyses (2S,6S)-2,6-diaminopimelate = meso-2,6-diaminopimelate. The protein operates within amino-acid biosynthesis; L-lysine biosynthesis via DAP pathway; DL-2,6-diaminopimelate from LL-2,6-diaminopimelate: step 1/1. Functionally, catalyzes the stereoinversion of LL-2,6-diaminopimelate (L,L-DAP) to meso-diaminopimelate (meso-DAP), a precursor of L-lysine and an essential component of the bacterial peptidoglycan. The protein is Diaminopimelate epimerase of Wolbachia sp. subsp. Brugia malayi (strain TRS).